Consider the following 369-residue polypeptide: Caffeine synthase 1 (369 aa).

Tyr24 contacts S-adenosyl-L-homocysteine. Thr31 is a binding site for caffeine. Cys66, Asn71, Asp103, Leu104, Ser138, and Phe139 together coordinate S-adenosyl-L-homocysteine. The caffeine site is built by Tyr156, His159, and Trp160. Asn177 serves as a coordination point for Mg(2+). A caffeine-binding site is contributed by Arg225. Residues Asp263, Phe265, and Asn266 each contribute to the Mg(2+) site. Caffeine is bound at residue Phe321.

It belongs to the methyltransferase superfamily. Type-7 methyltransferase family. Mg(2+) is required as a cofactor.

The enzyme catalyses theobromine + S-adenosyl-L-methionine = caffeine + S-adenosyl-L-homocysteine + H(+). It carries out the reaction 7-methylxanthine + S-adenosyl-L-methionine = theobromine + S-adenosyl-L-homocysteine + H(+). Its pathway is alkaloid biosynthesis. In terms of biological role, involved in the biosynthesis of caffeine. Catalyzes the conversion of 7-methylxanthine (7mX) to theobromine and of theobromine to caffeine. The chain is Caffeine synthase 1 from Camellia taliensis (Wild tea).